The primary structure comprises 258 residues: MENTATAPNAKLEVKNLNFYYGKFHAIRNVNMSIRENKVTAFIGPSGCGKSTLLRTFNRMFELYPGQRAEGEILLDGENLLTSKTDISLIRAKVGMVFQKPTPFPMSIYDNIAFGVRLFERLSKGEMDERVEWALSKAALWNEVKDKLHQSGNSLSGGQQQRLCIARGVAIKPEVLLLDEPCSALDPISTAKIEELIAELKHEYTVVIVTHNMQQAARCSDYTAYMYLGELMEYGATDQIFVKPARKETEDYITGRFG.

The 242-residue stretch at 12-253 (LEVKNLNFYY…PARKETEDYI (242 aa)) folds into the ABC transporter domain. 44–51 (GPSGCGKS) is a binding site for ATP.

This sequence belongs to the ABC transporter superfamily. Phosphate importer (TC 3.A.1.7) family. In terms of assembly, the complex is composed of two ATP-binding proteins (PstB), two transmembrane proteins (PstC and PstA) and a solute-binding protein (PstS).

The protein resides in the cell inner membrane. It carries out the reaction phosphate(out) + ATP + H2O = ADP + 2 phosphate(in) + H(+). In terms of biological role, part of the ABC transporter complex PstSACB involved in phosphate import. Responsible for energy coupling to the transport system. This Bordetella parapertussis (strain 12822 / ATCC BAA-587 / NCTC 13253) protein is Phosphate import ATP-binding protein PstB.